Consider the following 495-residue polypeptide: MDNKVSILNQPKPFKMIFFIELWERFGYYGLQGILAVYFVDKLGFSMQDSFVTFGAFAALVYGLVSVGGYVGDYVLGTKRTMVFGAVVLALGYFLMGFSILNPNFIYVALGAIAVGNGLFKANPSSLLAKCYEKGDSRLDGAFTLYYMSINIGSLVSLSISPVIANNYGYEYAFIICGLGLIASLFSYFSLRSTVQGIGSEPDALPLNKTKALIVLIGTIASTLVCAWLLQNIMMANLALGLIGVGVVGFFLKETFKEVGEQRNKMIVAFILMLQAIIFYVLYAQMPTSLNFFAINNVHSELFGMDINPVSLQALNPFWVIFCSPILAYLYTYYGNQNKDLSMPGKFTVGMFMCAFGFLSVAAAGNWFADQAGMVSVWWMVLVYLFQSLGELMISGLGLAMVASLVPQRLMGFTMGAWFLTQAASFIIGGYVATFSATPEHLTDPLDTLPVYTELFQNIGFVTLAVAIVMAITAPKLNKMMTSSQPEDAELVEQP.

The Cytoplasmic portion of the chain corresponds to 1–16; it reads MDNKVSILNQPKPFKM. Residues 17–37 form a helical membrane-spanning segment; sequence IFFIELWERFGYYGLQGILAV. At 38-50 the chain is on the periplasmic side; the sequence is YFVDKLGFSMQDS. The helical transmembrane segment at 51-71 threads the bilayer; sequence FVTFGAFAALVYGLVSVGGYV. Residues 72-80 are Cytoplasmic-facing; sequence GDYVLGTKR. A helical membrane pass occupies residues 81-101; that stretch reads TMVFGAVVLALGYFLMGFSIL. The Periplasmic segment spans residues 102–104; that stretch reads NPN. Residues 105–125 form a helical membrane-spanning segment; it reads FIYVALGAIAVGNGLFKANPS. Over 126 to 144 the chain is Cytoplasmic; sequence SLLAKCYEKGDSRLDGAFT. Residues 145-165 form a helical membrane-spanning segment; that stretch reads LYYMSINIGSLVSLSISPVIA. The Periplasmic segment spans residues 166-170; that stretch reads NNYGY. A helical membrane pass occupies residues 171–191; sequence EYAFIICGLGLIASLFSYFSL. Residues 192 to 209 are Cytoplasmic-facing; it reads RSTVQGIGSEPDALPLNK. The helical transmembrane segment at 210–230 threads the bilayer; it reads TKALIVLIGTIASTLVCAWLL. Residue Q231 is a topological domain, periplasmic. A helical transmembrane segment spans residues 232 to 252; sequence NIMMANLALGLIGVGVVGFFL. At 253–265 the chain is on the cytoplasmic side; it reads KETFKEVGEQRNK. A helical membrane pass occupies residues 266–286; that stretch reads MIVAFILMLQAIIFYVLYAQM. At 287–309 the chain is on the periplasmic side; it reads PTSLNFFAINNVHSELFGMDINP. A helical transmembrane segment spans residues 310–330; it reads VSLQALNPFWVIFCSPILAYL. Over 331 to 348 the chain is Cytoplasmic; the sequence is YTYYGNQNKDLSMPGKFT. The chain crosses the membrane as a helical span at residues 349–369; the sequence is VGMFMCAFGFLSVAAAGNWFA. Residues 370 to 373 lie on the Periplasmic side of the membrane; sequence DQAG. A helical membrane pass occupies residues 374 to 394; sequence MVSVWWMVLVYLFQSLGELMI. Over 395 to 409 the chain is Cytoplasmic; that stretch reads SGLGLAMVASLVPQR. The chain crosses the membrane as a helical span at residues 410-430; that stretch reads LMGFTMGAWFLTQAASFIIGG. Residues 431–454 lie on the Periplasmic side of the membrane; sequence YVATFSATPEHLTDPLDTLPVYTE. The helical transmembrane segment at 455–475 threads the bilayer; the sequence is LFQNIGFVTLAVAIVMAITAP. Residues 476 to 495 are Cytoplasmic-facing; the sequence is KLNKMMTSSQPEDAELVEQP.

Belongs to the major facilitator superfamily. Proton-dependent oligopeptide transporter (POT/PTR) (TC 2.A.17) family. DtpB subfamily.

It is found in the cell inner membrane. In terms of biological role, proton-dependent permease that transports di- and tripeptides. The sequence is that of Dipeptide and tripeptide permease B from Aliivibrio fischeri (strain MJ11) (Vibrio fischeri).